We begin with the raw amino-acid sequence, 144 residues long: Sec-independent protein translocase protein TatB (144 aa).

The helical transmembrane segment at 1 to 21 threads the bilayer; that stretch reads MFEIGFWELVLVAIIGIVVVG. The disordered stretch occupies residues 97–144; the sequence is KMIDEPPYQEPPPAAHSVQTDAEAYRDTGIEPADKSSSPEHHHDDAAR. Basic and acidic residues predominate over residues 119 to 144; that stretch reads EAYRDTGIEPADKSSSPEHHHDDAAR.

This sequence belongs to the TatB family. As to quaternary structure, the Tat system comprises two distinct complexes: a TatABC complex, containing multiple copies of TatA, TatB and TatC subunits, and a separate TatA complex, containing only TatA subunits. Substrates initially bind to the TatABC complex, which probably triggers association of the separate TatA complex to form the active translocon.

Its subcellular location is the cell inner membrane. Its function is as follows. Part of the twin-arginine translocation (Tat) system that transports large folded proteins containing a characteristic twin-arginine motif in their signal peptide across membranes. Together with TatC, TatB is part of a receptor directly interacting with Tat signal peptides. TatB may form an oligomeric binding site that transiently accommodates folded Tat precursor proteins before their translocation. The sequence is that of Sec-independent protein translocase protein TatB from Dichelobacter nodosus (strain VCS1703A).